We begin with the raw amino-acid sequence, 42 residues long: F420-non-reducing hydrogenase vhu subunit U (42 aa).

Ni(2+) is bound by residues Sec-21 and Cys-24. A non-standard amino acid (selenocysteine) is located at residue Sec-21. Positions 28–42 (VLDRVKFRIERKDED) are cleaved as a propeptide — removed in mature form.

This sequence belongs to the [NiFe]/[NiFeSe] hydrogenase large subunit family. The F420-non-reducing hydrogenase vhu is composed of four subunits; VhuA, VhuD, VhuG and VhuU. The cofactor is Ni(2+).

This Methanopyrus kandleri (strain AV19 / DSM 6324 / JCM 9639 / NBRC 100938) protein is F420-non-reducing hydrogenase vhu subunit U (vhuU).